Here is a 1024-residue protein sequence, read N- to C-terminus: Beta-galactosidase (1024 aa).

The substrate site is built by Asn-103 and Asp-202. Asp-202 lines the Na(+) pocket. The Mg(2+) site is built by Glu-417, His-419, and Glu-462. Residues Glu-462 and 538–541 contribute to the substrate site; that span reads EYAH. Glu-462 acts as the Proton donor in catalysis. Residue Glu-538 is the Nucleophile of the active site. Residue Asn-598 coordinates Mg(2+). 2 residues coordinate Na(+): Phe-602 and Asn-605. The substrate site is built by Asn-605 and Trp-1000.

This sequence belongs to the glycosyl hydrolase 2 family. Homotetramer. It depends on Mg(2+) as a cofactor. The cofactor is Na(+).

It carries out the reaction Hydrolysis of terminal non-reducing beta-D-galactose residues in beta-D-galactosides.. This is Beta-galactosidase from Escherichia coli O17:K52:H18 (strain UMN026 / ExPEC).